The chain runs to 293 residues: DNA-directed RNA polymerase III subunit rpc6 (293 aa).

The protein belongs to the eukaryotic RPC34/RPC39 RNA polymerase subunit family. Component of the RNA polymerase III (Pol III) complex.

The protein resides in the nucleus. Its function is as follows. DNA-dependent RNA polymerase catalyzes the transcription of DNA into RNA using the four ribonucleoside triphosphates as substrates. Specific peripheric component of RNA polymerase III which synthesizes small RNAs, such as 5S rRNA and tRNAs. May direct RNA Pol III binding to the TFIIIB-DNA complex. This is DNA-directed RNA polymerase III subunit rpc6 (polr3f) from Dictyostelium discoideum (Social amoeba).